We begin with the raw amino-acid sequence, 891 residues long: Targeting protein for Xklp2 homolog (891 aa).

Basic and acidic residues predominate over residues 42-54 (HENGVPLTFDDKA). 5 disordered regions span residues 42–310 (HENG…KSCP), 418–454 (NLRK…SFSG), 472–518 (HTKT…NRHR), 723–746 (CSGV…AEKG), and 789–891 (STKP…SHTS). Polar residues predominate over residues 108-124 (DDVSSAESETCEMSTDS). The span at 141-154 (DDEATVQESSDAEE) shows a compositional bias: acidic residues. Over residues 155-173 (TQTLPSSCVDSSTAEMSTD) the composition is skewed to polar residues. Over residues 236–246 (PTRKSPRLHSR) the composition is skewed to basic residues. Positions 442-454 (DNRKRTHEESFSG) are enriched in basic and acidic residues. A compositionally biased stretch (polar residues) spans 791 to 802 (KPMTDISNFSLN). Basic and acidic residues-rich tracts occupy residues 803-822 (TERR…ERQL) and 831-852 (REAE…DSIH).

This sequence belongs to the TPX2 family. Detectable in immature oocytes.

The protein resides in the nucleus. It is found in the cytoplasm. The protein localises to the cytoskeleton. Its subcellular location is the spindle. Its function is as follows. Spindle assembly factor. Required for normal assembly of mitotic spindles. This is Targeting protein for Xklp2 homolog from Patiria pectinifera (Starfish).